The chain runs to 156 residues: Arginine repressor (156 aa).

This sequence belongs to the ArgR family.

The protein localises to the cytoplasm. The protein operates within amino-acid biosynthesis; L-arginine biosynthesis [regulation]. Its function is as follows. Regulates arginine biosynthesis genes. This chain is Arginine repressor, found in Salmonella agona (strain SL483).